The chain runs to 1398 residues: Disease resistance protein RPV1 (1398 aa).

Positions threonine 22 to leucine 185 constitute a TIR domain. NAD(+) contacts are provided by residues arginine 31–arginine 36 and glycine 63. The active site involves glutamate 97. The NB-ARC domain occupies serine 201 to isoleucine 440. LRR repeat units lie at residues valine 203–valine 225, lysine 423–aspartate 447, leucine 478–isoleucine 504, isoleucine 535–lysine 560, serine 610–glycine 632, glycine 633–arginine 657, methionine 678–methionine 702, lysine 703–leucine 726, serine 728–methionine 750, lysine 751–leucine 773, serine 775–methionine 797, lysine 798–leucine 820, serine 822–methionine 844, lysine 845–leucine 867, serine 869–methionine 891, lysine 892–leucine 914, serine 916–methionine 938, lysine 939–leucine 961, serine 963–methionine 985, lysine 986–leucine 1008, serine 1010–methionine 1032, lysine 1033–leucine 1055, methionine 1079–leucine 1102, and leucine 1105–alanine 1128. The segment covering glutamine 1315–asparagine 1328 has biased composition (polar residues). The interval glutamine 1315–glutamine 1336 is disordered. An LRR 25 repeat occupies leucine 1346–arginine 1369. A Nuclear localization signal motif is present at residues arginine 1369–arginine 1373.

This sequence belongs to the disease resistance TIR-NB-LRR family. In terms of assembly, homodimer; homodimerization is required for NAD(+) hydrolase (NADase) activity.

It localises to the nucleus. Its subcellular location is the cytoplasm. It catalyses the reaction NAD(+) + H2O = ADP-D-ribose + nicotinamide + H(+). Its function is as follows. Disease resistance (R) protein that confers resistance to multiple powdery and downy mildew by promoting cell death. Acts as a NAD(+) hydrolase (NADase): in response to activation, catalyzes cleavage of NAD(+) into ADP-D-ribose (ADPR) and nicotinamide; NAD(+) cleavage triggering a defense system that promotes cell death. This is Disease resistance protein RPV1 from Vitis rotundifolia (Muscadine grape).